Consider the following 155-residue polypeptide: 2-C-methyl-D-erythritol 2,4-cyclodiphosphate synthase (155 aa).

A divalent metal cation contacts are provided by Asp-10, His-12, and His-46. 10–12 (DSH) lines the 4-CDP-2-C-methyl-D-erythritol 2-phosphate pocket. 4-CDP-2-C-methyl-D-erythritol 2-phosphate-binding positions include 60-62 (DIG), 65-69 (FDEND), and Lys-140.

Belongs to the IspF family. In terms of assembly, homotrimer. A divalent metal cation serves as cofactor.

The catalysed reaction is 4-CDP-2-C-methyl-D-erythritol 2-phosphate = 2-C-methyl-D-erythritol 2,4-cyclic diphosphate + CMP. The protein operates within isoprenoid biosynthesis; isopentenyl diphosphate biosynthesis via DXP pathway; isopentenyl diphosphate from 1-deoxy-D-xylulose 5-phosphate: step 4/6. Functionally, involved in the biosynthesis of isopentenyl diphosphate (IPP) and dimethylallyl diphosphate (DMAPP), two major building blocks of isoprenoid compounds. Catalyzes the conversion of 4-diphosphocytidyl-2-C-methyl-D-erythritol 2-phosphate (CDP-ME2P) to 2-C-methyl-D-erythritol 2,4-cyclodiphosphate (ME-CPP) with a corresponding release of cytidine 5-monophosphate (CMP). The polypeptide is 2-C-methyl-D-erythritol 2,4-cyclodiphosphate synthase (Mycoplasmoides gallisepticum (strain R(low / passage 15 / clone 2)) (Mycoplasma gallisepticum)).